A 1050-amino-acid chain; its full sequence is Beta-galactosidase (1050 aa).

Positions 110 and 209 each coordinate substrate. Asp209 serves as a coordination point for Na(+). Positions 432, 434, and 477 each coordinate Mg(2+). Residues Glu477 and 553–556 (EYAH) each bind substrate. Glu477 functions as the Proton donor in the catalytic mechanism. Residue Glu553 is the Nucleophile of the active site. Asn613 is a binding site for Mg(2+). Phe617 and Asn620 together coordinate Na(+). Substrate contacts are provided by Asn620 and Trp1023.

Belongs to the glycosyl hydrolase 2 family. As to quaternary structure, homotetramer. The cofactor is Mg(2+). Na(+) is required as a cofactor.

It carries out the reaction Hydrolysis of terminal non-reducing beta-D-galactose residues in beta-D-galactosides.. The chain is Beta-galactosidase from Yersinia enterocolitica serotype O:8 / biotype 1B (strain NCTC 13174 / 8081).